The sequence spans 72 residues: ATP synthase subunit c (72 aa).

A run of 2 helical transmembrane segments spans residues 5–25 (LLAA…IGIA) and 51–71 (AGLS…LLFV).

The protein belongs to the ATPase C chain family. As to quaternary structure, F-type ATPases have 2 components, F(1) - the catalytic core - and F(0) - the membrane proton channel. F(1) has five subunits: alpha(3), beta(3), gamma(1), delta(1), epsilon(1). F(0) has three main subunits: a(1), b(2) and c(10-14). The alpha and beta chains form an alternating ring which encloses part of the gamma chain. F(1) is attached to F(0) by a central stalk formed by the gamma and epsilon chains, while a peripheral stalk is formed by the delta and b chains.

The protein resides in the cell membrane. Its function is as follows. F(1)F(0) ATP synthase produces ATP from ADP in the presence of a proton or sodium gradient. F-type ATPases consist of two structural domains, F(1) containing the extramembraneous catalytic core and F(0) containing the membrane proton channel, linked together by a central stalk and a peripheral stalk. During catalysis, ATP synthesis in the catalytic domain of F(1) is coupled via a rotary mechanism of the central stalk subunits to proton translocation. In terms of biological role, key component of the F(0) channel; it plays a direct role in translocation across the membrane. A homomeric c-ring of between 10-14 subunits forms the central stalk rotor element with the F(1) delta and epsilon subunits. This chain is ATP synthase subunit c, found in Clostridium perfringens (strain ATCC 13124 / DSM 756 / JCM 1290 / NCIMB 6125 / NCTC 8237 / Type A).